Here is a 479-residue protein sequence, read N- to C-terminus: MTNTEKYKQLRSMIPEMRRIKHIHFVGIGGAGMGGIAEVLVNEGYHISGSDIATNSVTDRLISLGAKVIIGHHADSVEHADVVVVSTAINHENPEIIAAKERRIPIVRRAEMLAELMRYRHGVAIAGTHGKTTTTSLIASVYAQAQRDPTFVIGGLLNSAGTNARLGTSRYLIAEADESDASFLHLQPMVSVITNIEADHMDTYGGDFEKLKTTFVDFLHNLPFYGVAVMCIDDEINREIMPRVGRQIVTYGFSQDADVQALNFNQIGHQSQFVVRRKDKEDLALVLNLPGEHNVLNALAAIAVASEDDIDDESIVKALAEFEGIGRRFQHLGEFNTANGQVMLVDDYGHHPSEVLATIKAARAGWPDKRLVMAYQPHRYSRTRDLYDDFVEVLSQVDCLLLLDVYSAGEAAIPGADGRALCRSIRLRGQIDPIFVASPDQLASVLPDVLQAGDLLLTQGAGNIGALSKLLASTNLGFE.

An ATP-binding site is contributed by 127-133 (GTHGKTT).

This sequence belongs to the MurCDEF family.

The protein resides in the cytoplasm. The enzyme catalyses UDP-N-acetyl-alpha-D-muramate + L-alanine + ATP = UDP-N-acetyl-alpha-D-muramoyl-L-alanine + ADP + phosphate + H(+). The protein operates within cell wall biogenesis; peptidoglycan biosynthesis. In terms of biological role, cell wall formation. The sequence is that of UDP-N-acetylmuramate--L-alanine ligase from Shewanella denitrificans (strain OS217 / ATCC BAA-1090 / DSM 15013).